Reading from the N-terminus, the 473-residue chain is Glutamate--tRNA ligase 1 (473 aa).

The short motif at 11–21 (PSPTGFLHIGG) is the 'HIGH' region element. Residues 111-132 (REQARKEGRPPRYDGRWRDRAE) are disordered. The 'KMSKS' region motif lies at 240 to 244 (KLSKR). Lys-243 lines the ATP pocket.

This sequence belongs to the class-I aminoacyl-tRNA synthetase family. Glutamate--tRNA ligase type 1 subfamily. Monomer.

It localises to the cytoplasm. It carries out the reaction tRNA(Glu) + L-glutamate + ATP = L-glutamyl-tRNA(Glu) + AMP + diphosphate. Functionally, catalyzes the attachment of glutamate to tRNA(Glu) in a two-step reaction: glutamate is first activated by ATP to form Glu-AMP and then transferred to the acceptor end of tRNA(Glu). The sequence is that of Glutamate--tRNA ligase 1 from Beijerinckia indica subsp. indica (strain ATCC 9039 / DSM 1715 / NCIMB 8712).